The following is a 389-amino-acid chain: Chalcone synthase 3 (389 aa).

C164 is a catalytic residue.

Belongs to the thiolase-like superfamily. Chalcone/stilbene synthases family.

It catalyses the reaction (E)-4-coumaroyl-CoA + 3 malonyl-CoA + 3 H(+) = 2',4,4',6'-tetrahydroxychalcone + 3 CO2 + 4 CoA. The protein operates within secondary metabolite biosynthesis; flavonoid biosynthesis. The primary product of this enzyme is 4,2',4',6'-tetrahydroxychalcone (also termed naringenin-chalcone or chalcone) which can under specific conditions spontaneously isomerize into naringenin. This is Chalcone synthase 3 (CHS3) from Trifolium subterraneum (Subterranean clover).